Here is a 355-residue protein sequence, read N- to C-terminus: Methylthioribose-1-phosphate isomerase (355 aa).

Residues 53 to 55 (RGA), arginine 96, and glutamine 205 contribute to the substrate site. The active-site Proton donor is aspartate 246. Position 256–257 (256–257 (NK)) interacts with substrate.

It belongs to the eIF-2B alpha/beta/delta subunits family. MtnA subfamily.

It carries out the reaction 5-(methylsulfanyl)-alpha-D-ribose 1-phosphate = 5-(methylsulfanyl)-D-ribulose 1-phosphate. It participates in amino-acid biosynthesis; L-methionine biosynthesis via salvage pathway; L-methionine from S-methyl-5-thio-alpha-D-ribose 1-phosphate: step 1/6. Its function is as follows. Catalyzes the interconversion of methylthioribose-1-phosphate (MTR-1-P) into methylthioribulose-1-phosphate (MTRu-1-P). This is Methylthioribose-1-phosphate isomerase from Thermosynechococcus vestitus (strain NIES-2133 / IAM M-273 / BP-1).